A 443-amino-acid chain; its full sequence is 3-isopropylmalate dehydratase large subunit (443 aa).

Residues cysteine 347, cysteine 407, and cysteine 410 each contribute to the [4Fe-4S] cluster site.

It belongs to the aconitase/IPM isomerase family. LeuC type 1 subfamily. In terms of assembly, heterodimer of LeuC and LeuD. [4Fe-4S] cluster is required as a cofactor.

It carries out the reaction (2R,3S)-3-isopropylmalate = (2S)-2-isopropylmalate. It functions in the pathway amino-acid biosynthesis; L-leucine biosynthesis; L-leucine from 3-methyl-2-oxobutanoate: step 2/4. In terms of biological role, catalyzes the isomerization between 2-isopropylmalate and 3-isopropylmalate, via the formation of 2-isopropylmaleate. The protein is 3-isopropylmalate dehydratase large subunit of Buchnera aphidicola subsp. Uroleucon sonchi.